Consider the following 430-residue polypeptide: Dihydroorotase (430 aa).

The Zn(2+) site is built by His57 and His59. Substrate contacts are provided by residues 59–61 (HLR) and Asn91. The Zn(2+) site is built by Asp151, His178, and His231. Asn277 contacts substrate. Asp304 contributes to the Zn(2+) binding site. The active site involves Asp304. Residues His308 and 322-323 (PG) contribute to the substrate site.

This sequence belongs to the metallo-dependent hydrolases superfamily. DHOase family. Class I DHOase subfamily. It depends on Zn(2+) as a cofactor.

It carries out the reaction (S)-dihydroorotate + H2O = N-carbamoyl-L-aspartate + H(+). The protein operates within pyrimidine metabolism; UMP biosynthesis via de novo pathway; (S)-dihydroorotate from bicarbonate: step 3/3. In terms of biological role, catalyzes the reversible cyclization of carbamoyl aspartate to dihydroorotate. The polypeptide is Dihydroorotase (Mycobacterium bovis (strain ATCC BAA-935 / AF2122/97)).